The chain runs to 151 residues: Cysteine proteinase inhibitor 10 (151 aa).

A signal peptide spans 1–22; that stretch reads MATSPMLFLVSLLLVLVAAATG. The Cystatin domain maps to 40–109; it reads GGRTEIRDVG…GVAYYLKVAA (70 aa). The Secondary area of contact signature appears at 96 to 100; it reads QVVSG.

The protein belongs to the cystatin family. Phytocystatin subfamily.

It is found in the secreted. Its function is as follows. Specific inhibitor of cysteine proteinases. Probably involved in the regulation of endogenous processes and in defense against pests and pathogens. The sequence is that of Cysteine proteinase inhibitor 10 from Oryza sativa subsp. indica (Rice).